We begin with the raw amino-acid sequence, 200 residues long: Prostamide/prostaglandin F synthase (200 aa).

The protein belongs to the peroxiredoxin-like PRXL2 family. Prostamide/prostaglandin F synthase subfamily.

It is found in the cytoplasm. It localises to the cytosol. The catalysed reaction is prostaglandin H2 + [thioredoxin]-dithiol = prostaglandin F2alpha + [thioredoxin]-disulfide. It catalyses the reaction prostamide F2alpha + [thioredoxin]-disulfide = prostamide H2 + [thioredoxin]-dithiol. Catalyzes the reduction of prostaglandin-ethanolamide H(2) (prostamide H(2)) to prostamide F(2alpha) with NADPH as proton donor. Also able to reduce prostaglandin H(2) to prostaglandin F(2alpha). This is Prostamide/prostaglandin F synthase (prxl2b) from Salmo salar (Atlantic salmon).